Reading from the N-terminus, the 1593-residue chain is Nischarin (1593 aa).

Positions 1–134 (MAAATLSFGP…GVTAALAEEL (134 aa)) are necessary for binding to phosphoinositide-3-P; not sufficient for targeting to endosomes. The region spanning 12 to 122 (REAEPAKEAR…AHFLHFHLYE (111 aa)) is the PX domain. A necessary for homooligomerization and targeting to endosomes region spans residues 121-695 (YEVNGVTAAL…ERLALEWALG (575 aa)). An interaction with PAK1 region spans residues 246–869 (MSVRFSATSM…LVYSDKRMVQ (624 aa)). LRR repeat units lie at residues 290-311 (ALTT…VKLI), 313-334 (KIEY…QHLY), 335-356 (NLVH…HTKL), 358-379 (NVKT…HKLY), 380-401 (SLVN…KSIG), and 405-426 (CLER…RTKV). Positions 466–480 (SKLSNTEKKAGEDFR) are enriched in basic and acidic residues. A disordered region spans residues 466-499 (SKLSNTEKKAGEDFRLPPAPCIRPGGSPPAAPAS). Residues 482–496 (PPAPCIRPGGSPPAA) are compositionally biased toward pro residues. Phosphoserine occurs at positions 543, 545, and 548. Residues 624–694 (IEAANQREEA…EERLALEWAL (71 aa)) are a coiled coil. The segment at 629-687 (QREEAHGEQGEEEEEEEEEEDVAENRYFEMGPPDAEEEEGSGQGEEDEEDEDEEAEEER) is disordered. 2 stretches are compositionally biased toward acidic residues: residues 638–650 (GEEE…EEDV) and 662–685 (DAEE…EAEE). Residues 661–869 (PDAEEEEGSG…LVYSDKRMVQ (209 aa)) are interaction with LIMK. Residues 709–807 (KVLWCFLIHV…ANLHEFHADL (99 aa)) form an interaction with ITGA5 region. Positions 1016 to 1185 (NPSAKPRNQP…PAGGPAPAEA (170 aa)) are disordered. 2 stretches are compositionally biased toward low complexity: residues 1038–1069 (ETPA…LAPV) and 1081–1158 (AEAP…APAP). Repeat copies occupy residues 1081–1086 (AEAPAA), 1087–1092 (AEAPAA), 1093–1098 (AEAPAA), 1099–1104 (AEAPAA), 1105–1110 (AEAPAA), 1111–1116 (AEAPAA), 1123–1128 (AEAPAA), 1129–1134 (AEAPAA), 1135–1140 (AEAPAA), and 1141–1146 (AEAPAA). Residues 1081–1146 (AEAPAAAEAP…APAAAEAPAA (66 aa)) form a 10 X 6 AA tandem repeat of A-E-A-P-A-A region. A compositionally biased stretch (pro residues) spans 1159 to 1179 (NQAPAPARGPAPARGPAPAGG). A Phosphothreonine modification is found at threonine 1371. Position 1373 is a phosphoserine (serine 1373).

As to quaternary structure, homooligomer. Interacts with GRB2. Interacts with PIK3R1; probably associates with the PI3-kinase complex. Interacts with IRS4. Found in a complex with ITGA5 and PAK1. Found in a complex with LIMK1 and PAK1. Interacts with ITGA5 (via cytoplasmic domain); this interaction is direct. Interacts with PAK1 (via kinase domain); this interaction is direct and is increased upon activation of PAK1. Interacts with LIMK1 (via PDZ and kinase domain); this interaction is direct. Interacts with LIMK2; this interaction depends on LIMK2 activity. Interacts with RAC1 (activated state). Interacts with STK11; this interaction may increase STK11 activity. In terms of tissue distribution, highly expressed in brain and kidney. Moderately expressed in heart, liver, lung and skeletal muscle. Not detected in spleen and testis.

The protein resides in the cell membrane. Its subcellular location is the cytoplasm. It localises to the early endosome. The protein localises to the recycling endosome. Its function is as follows. Acts either as the functional imidazoline-1 receptor (I1R) candidate or as a membrane-associated mediator of the I1R signaling. Binds numerous imidazoline ligands that induces initiation of cell-signaling cascades triggering to cell survival, growth and migration. Its activation by the agonist rilmenidine induces an increase in phosphorylation of mitogen-activated protein kinases MAPK1 and MAPK3 in rostral ventrolateral medulla (RVLM) neurons that exhibited rilmenidine-evoked hypotension. Blocking its activation with efaroxan abolished rilmenidine-induced mitogen-activated protein kinase phosphorylation in RVLM neurons. Acts as a modulator of Rac-regulated signal transduction pathways. Suppresses Rac1-stimulated cell migration by interacting with PAK1 and inhibiting its kinase activity. Also blocks Pak-independent Rac signaling by interacting with RAC1 and inhibiting Rac1-stimulated NF-kB response element and cyclin D1 promoter activation. Also inhibits LIMK1 kinase activity by reducing LIMK1 'Tyr-508' phosphorylation. Inhibits Rac-induced cell migration and invasion in breast and colon epithelial cells. Inhibits lamellipodia formation, when overexpressed. Plays a role in protection against apoptosis. Involved in association with IRS4 in the enhancement of insulin activation of MAPK1 and MAPK3. When overexpressed, induces a redistribution of cell surface ITGA5 integrin to intracellular endosomal structures. The polypeptide is Nischarin (Nisch) (Mus musculus (Mouse)).